The chain runs to 285 residues: Acetyl-coenzyme A carboxylase carboxyl transferase subunit beta (285 aa).

The 263-residue stretch at 23–285 folds into the CoA carboxyltransferase N-terminal domain; that stretch reads VFRRCDGCSH…HLTAGRRARR (263 aa). Positions 27, 30, 46, and 49 each coordinate Zn(2+). The C4-type zinc-finger motif lies at 27 to 49; the sequence is CDGCSHTHDAAELARTFEVCSQC.

Belongs to the AccD/PCCB family. Acetyl-CoA carboxylase is a heterohexamer composed of biotin carboxyl carrier protein (AccB), biotin carboxylase (AccC) and two subunits each of ACCase subunit alpha (AccA) and ACCase subunit beta (AccD). The cofactor is Zn(2+).

The protein localises to the cytoplasm. It catalyses the reaction N(6)-carboxybiotinyl-L-lysyl-[protein] + acetyl-CoA = N(6)-biotinyl-L-lysyl-[protein] + malonyl-CoA. The protein operates within lipid metabolism; malonyl-CoA biosynthesis; malonyl-CoA from acetyl-CoA: step 1/1. In terms of biological role, component of the acetyl coenzyme A carboxylase (ACC) complex. Biotin carboxylase (BC) catalyzes the carboxylation of biotin on its carrier protein (BCCP) and then the CO(2) group is transferred by the transcarboxylase to acetyl-CoA to form malonyl-CoA. The protein is Acetyl-coenzyme A carboxylase carboxyl transferase subunit beta of Sorangium cellulosum (strain So ce56) (Polyangium cellulosum (strain So ce56)).